A 351-amino-acid chain; its full sequence is Methylthioribose-1-phosphate isomerase (351 aa).

The active-site Proton donor is the aspartate 244.

It belongs to the eIF-2B alpha/beta/delta subunits family. MtnA subfamily.

It is found in the cytoplasm. Its subcellular location is the nucleus. It carries out the reaction 5-(methylsulfanyl)-alpha-D-ribose 1-phosphate = 5-(methylsulfanyl)-D-ribulose 1-phosphate. It participates in amino-acid biosynthesis; L-methionine biosynthesis via salvage pathway; L-methionine from S-methyl-5-thio-alpha-D-ribose 1-phosphate: step 1/6. Functionally, catalyzes the interconversion of methylthioribose-1-phosphate (MTR-1-P) into methylthioribulose-1-phosphate (MTRu-1-P). This is Methylthioribose-1-phosphate isomerase from Anopheles gambiae (African malaria mosquito).